A 717-amino-acid chain; its full sequence is Mitotic spindle assembly checkpoint protein MAD1 (717 aa).

Methionine 1 bears the N-acetylmethionine mark. Serine 16 bears the Phosphoserine mark. Residues 46–631 (EQSMQLEERA…QTKIQEFRKV (586 aa)) adopt a coiled-coil conformation. Position 61 is an N6-acetyllysine; alternate (lysine 61). Residue lysine 61 forms a Glycyl lysine isopeptide (Lys-Gly) (interchain with G-Cter in SUMO2); alternate linkage. The Nuclear localization signal signature appears at 79 to 82 (KRAR). 2 positions are modified to phosphoserine: serine 214 and serine 428. The tract at residues 380–532 (LLEERKKREI…EMQMERLTLQ (153 aa)) is necessary for interaction with NEK2. Positions 540-551 (TKVLHMSLNPAS) are necessary for interaction with MAD2L1.

This sequence belongs to the MAD1 family. Homodimer. Dimerizes via its N- and C- terminal regions. Heterodimerizes with MAD2L1 in order to form a tetrameric MAD1L1-MAD2L1 core complex. Interacts with the closed conformation form of MAD2L1 (C-MAD2) and open conformation form of MAD2L1 (O-MAD2). It is unclear whether MAD1L1 dimerization promotes the conversion of closed to open conformation of MAD2L1. Formation of a heterotetrameric core complex containing two molecules each of MAD1L1 and of MAD2L1 promotes binding of another molecule of MAD2L1 to each MAD2L1, resulting in a heterohexamer. Perturbation of the original MAD1L1-MAD2L1 structure by the spindle checkpoint may decrease MAD2L1 affinity for MAD1L1. CDC20 can compete with MAD1L1 for MAD2L1 binding, until the attachment and/or tension dampen the checkpoint signal, preventing further release of MAD2L1 on to CDC20. Also able to interact with the BUB1/BUB3 complex. Interacts with NEK2. Interacts with TTK. Interacts with TPR; the interactions occurs in a microtubule-independent manner. Interacts with IK. Interacts with the viral Tax protein. Interacts with PRAP1. In terms of processing, phosphorylated; by BUB1. Become hyperphosphorylated in late S through M phases or after mitotic spindle damage.

The protein localises to the nucleus. It localises to the chromosome. It is found in the centromere. The protein resides in the kinetochore. Its subcellular location is the nucleus envelope. The protein localises to the cytoplasm. It localises to the cytoskeleton. It is found in the microtubule organizing center. The protein resides in the centrosome. Its subcellular location is the spindle. The protein localises to the spindle pole. Functionally, component of the spindle-assembly checkpoint that prevents the onset of anaphase until all chromosomes are properly aligned at the metaphase plate. Forms a heterotetrameric complex with the closed conformation form of MAD2L1 (C-MAD2) at unattached kinetochores during prometaphase, recruits an open conformation of MAD2L1 (O-MAD2) and promotes the conversion of O-MAD2 to C-MAD2, which ensures mitotic checkpoint signaling. This is Mitotic spindle assembly checkpoint protein MAD1 (MAD1L1) from Cricetulus griseus (Chinese hamster).